Consider the following 302-residue polypeptide: Bifunctional ligase/repressor BirA (302 aa).

Residues 14–33 (QPKVRSELEKFSKNLEEDIQ) constitute a DNA-binding region (H-T-H motif). Positions 62 to 236 (QISTALFPYS…HLYTRLNIFE (175 aa)) constitute a BPL/LPL catalytic domain. Biotin is bound by residues 80 to 82 (STN), Gln103, 107 to 109 (RGR), and Lys167.

This sequence belongs to the biotin--protein ligase family.

It carries out the reaction biotin + L-lysyl-[protein] + ATP = N(6)-biotinyl-L-lysyl-[protein] + AMP + diphosphate + H(+). Acts both as a biotin--[acetyl-CoA-carboxylase] ligase and a biotin-operon repressor. In the presence of ATP, BirA activates biotin to form the BirA-biotinyl-5'-adenylate (BirA-bio-5'-AMP or holoBirA) complex. HoloBirA can either transfer the biotinyl moiety to the biotin carboxyl carrier protein (BCCP) subunit of acetyl-CoA carboxylase, or bind to the biotin operator site and inhibit transcription of the operon. In Haemophilus influenzae (strain ATCC 51907 / DSM 11121 / KW20 / Rd), this protein is Bifunctional ligase/repressor BirA.